A 101-amino-acid polypeptide reads, in one-letter code: NADH-quinone oxidoreductase subunit K (101 aa).

Helical transmembrane passes span 4-24, 30-50, and 61-81; these read LADY…GIFI, LVLL…FIAF, and VFVF…LAIV.

It belongs to the complex I subunit 4L family. As to quaternary structure, NDH-1 is composed of 14 different subunits. Subunits NuoA, H, J, K, L, M, N constitute the membrane sector of the complex.

It is found in the cell inner membrane. The catalysed reaction is a quinone + NADH + 5 H(+)(in) = a quinol + NAD(+) + 4 H(+)(out). NDH-1 shuttles electrons from NADH, via FMN and iron-sulfur (Fe-S) centers, to quinones in the respiratory chain. The immediate electron acceptor for the enzyme in this species is believed to be ubiquinone. Couples the redox reaction to proton translocation (for every two electrons transferred, four hydrogen ions are translocated across the cytoplasmic membrane), and thus conserves the redox energy in a proton gradient. The protein is NADH-quinone oxidoreductase subunit K of Alkalilimnicola ehrlichii (strain ATCC BAA-1101 / DSM 17681 / MLHE-1).